We begin with the raw amino-acid sequence, 505 residues long: 2,3-bisphosphoglycerate-independent phosphoglycerate mutase (505 aa).

Positions 13 and 63 each coordinate Mn(2+). S63 (phosphoserine intermediate) is an active-site residue. Residues H124, 153-154 (RD), R183, R189, 254-257 (RADR), and K330 contribute to the substrate site. The Mn(2+) site is built by D396, H400, D437, H438, and H456.

It belongs to the BPG-independent phosphoglycerate mutase family. Monomer. Mn(2+) serves as cofactor.

The catalysed reaction is (2R)-2-phosphoglycerate = (2R)-3-phosphoglycerate. It functions in the pathway carbohydrate degradation; glycolysis; pyruvate from D-glyceraldehyde 3-phosphate: step 3/5. Functionally, catalyzes the interconversion of 2-phosphoglycerate and 3-phosphoglycerate. The polypeptide is 2,3-bisphosphoglycerate-independent phosphoglycerate mutase (Ruegeria pomeroyi (strain ATCC 700808 / DSM 15171 / DSS-3) (Silicibacter pomeroyi)).